Reading from the N-terminus, the 716-residue chain is Lamin-like protein (716 aa).

Composition is skewed to basic residues over residues 1–10 and 35–45; these read MDMSKKKSKR and KKTKTTTKKKA. A disordered region spans residues 1–107; it reads MDMSKKKSKR…TIQSIPTTPI (107 aa). Residues 62–107 show a composition bias toward low complexity; that stretch reads ITTTTTSTSTTNNNNITTTSTSSQQSNGTLSSSSSPTIQSIPTTPI. A coiled-coil region spans residues 130 to 450; the sequence is LREKDELSLI…KMRKQMADLK (321 aa). The region spanning 132 to 515 is the IF rod domain; it reads EKDELSLIHN…ELVKGFEKTV (384 aa). Positions 519–522 match the Nuclear localization signal motif; sequence KRKR. The interval 519 to 584 is disordered; it reads KRKRSKLQHE…PTGPEQSELF (66 aa). Positions 532–545 are enriched in polar residues; sequence AANQDQNGMTIEEQ. Positions 546–564 are enriched in low complexity; it reads SSTSTTTTTSATGSSSSTS. The segment covering 565–584 has biased composition (polar residues); sequence HLDNIDSSKLPTGPEQSELF. One can recognise an LTD domain in the interval 575 to 698; that stretch reads PTGPEQSELF…EETTTVTLPA (124 aa). Positions 713–716 match the CAAX motif motif; sequence CLIM.

It belongs to the intermediate filament family. In terms of assembly, homodimer. Lamin dimers then assemble into dimeric head-to-tail polymers. Ultimately, two head-to-tail polymers assemble laterally into a protofilament with a uniformly shaped rod of 3.5 nm in diameter.

The protein resides in the nucleus lamina. The protein localises to the nucleus envelope. It localises to the nucleus inner membrane. Its function is as follows. Lamins are intermediate filament proteins that assemble into a filamentous meshwork, and which constitute the major components of the nuclear lamina, a fibrous layer on the nucleoplasmic side of the inner nuclear membrane. Lamins provide a framework for the nuclear envelope, bridging the nuclear envelope and chromatin, thereby playing an important role in nuclear assembly, chromatin organization, nuclear membrane and telomere dynamics. The structural integrity of the lamina is strictly controlled by the cell cycle, as seen by the disintegration and formation of the nuclear envelope in prophase and telophase, respectively. Helps to maintain integrity of nuclear structures in response to mechanical stress. The protein is Lamin-like protein of Dictyostelium discoideum (Social amoeba).